A 449-amino-acid chain; its full sequence is MPRKHFGTDGIRGQANSVITPELAMKVAQATGVLFQRGEHRHRAVIGKDTRLSSYMIEYAMVAGFASVGVDALLLGPMPTPAVAMLTHSMRADVGVMISASHNSYEDNGIKLFGPDGFKLSDEVETKIETMLDAGFALKLSKPADLGRAMRVEGDRARYIEFAKRTLTRSLSLEGLRIVVDCANGAAYKVAPEALWELGAEVISIGVEPDGFNINRGVGSTSPQALVKKVREMRADIGIALDGDADRVLIVDETGKIVDGDQLMAVIAASWKEDGRLSRPGIVATVMSNLGLERYLESIGLTLARTAVGDRYVLEHMRSEGYNLGGEQSGHIILSDFCTTGDGLVAALQLLAVVKRLEKPVSQVCRRFEPSPQVLRSVRVAAGKPLEDASVARAIDLARKRLAASGRLVIRASGTEPVIRVMGEGDDLDLVESIVNELCDIVASSARAA.

Serine 101 functions as the Phosphoserine intermediate in the catalytic mechanism. 4 residues coordinate Mg(2+): serine 101, aspartate 242, aspartate 244, and aspartate 246. The residue at position 101 (serine 101) is a Phosphoserine.

Belongs to the phosphohexose mutase family. Requires Mg(2+) as cofactor. In terms of processing, activated by phosphorylation.

The enzyme catalyses alpha-D-glucosamine 1-phosphate = D-glucosamine 6-phosphate. Its function is as follows. Catalyzes the conversion of glucosamine-6-phosphate to glucosamine-1-phosphate. The protein is Phosphoglucosamine mutase of Methylocella silvestris (strain DSM 15510 / CIP 108128 / LMG 27833 / NCIMB 13906 / BL2).